The primary structure comprises 464 residues: GTPase Der (464 aa).

2 EngA-type G domains span residues 5 to 169 (PTIA…KQKG) and 190 to 368 (IKVA…RESH). GTP contacts are provided by residues 11-18 (GRPNVGKS), 58-62 (DTGGI), 121-124 (NKAD), 196-203 (GRPNAGKS), 243-247 (DTAGM), and 308-311 (NKFD). The KH-like domain maps to 369 to 461 (NLPTTGQLNR…PVIFSARSRV (93 aa)).

It belongs to the TRAFAC class TrmE-Era-EngA-EngB-Septin-like GTPase superfamily. EngA (Der) GTPase family. As to quaternary structure, associates with the 50S ribosomal subunit.

Its function is as follows. GTPase that plays an essential role in the late steps of ribosome biogenesis. The polypeptide is GTPase Der (Akkermansia muciniphila (strain ATCC BAA-835 / DSM 22959 / JCM 33894 / BCRC 81048 / CCUG 64013 / CIP 107961 / Muc)).